Reading from the N-terminus, the 545-residue chain is Chaperonin GroEL (545 aa).

ATP is bound by residues 30–33, Lys-51, 87–91, Gly-415, and Asp-495; these read TLGP and DGTTT.

It belongs to the chaperonin (HSP60) family. As to quaternary structure, forms a cylinder of 14 subunits composed of two heptameric rings stacked back-to-back. Interacts with the co-chaperonin GroES.

The protein resides in the cytoplasm. It catalyses the reaction ATP + H2O + a folded polypeptide = ADP + phosphate + an unfolded polypeptide.. Functionally, together with its co-chaperonin GroES, plays an essential role in assisting protein folding. The GroEL-GroES system forms a nano-cage that allows encapsulation of the non-native substrate proteins and provides a physical environment optimized to promote and accelerate protein folding. In Shewanella amazonensis (strain ATCC BAA-1098 / SB2B), this protein is Chaperonin GroEL.